The primary structure comprises 183 residues: Ribulose bisphosphate carboxylase small subunit, chloroplastic (183 aa).

A chloroplast-targeting transit peptide spans 1–59 (MASSMISSGTVATVSADRPAPAQARMVAPFNGLKSSSAFPVTRKSNDITSIASNGGRVQ).

The protein belongs to the RuBisCO small chain family. In terms of assembly, heterohexadecamer of 8 large and 8 small subunits.

The protein resides in the plastid. Its subcellular location is the chloroplast. In terms of biological role, ruBisCO catalyzes two reactions: the carboxylation of D-ribulose 1,5-bisphosphate, the primary event in carbon dioxide fixation, as well as the oxidative fragmentation of the pentose substrate. Both reactions occur simultaneously and in competition at the same active site. Although the small subunit is not catalytic it is essential for maximal activity. In Pyrus pyrifolia (Chinese pear), this protein is Ribulose bisphosphate carboxylase small subunit, chloroplastic.